Here is a 225-residue protein sequence, read N- to C-terminus: Uridylate kinase (225 aa).

Residue 9–10 (GS) coordinates ATP. Gly46 serves as a coordination point for UMP. Residues Gly47 and Arg51 each contribute to the ATP site. Residues Asp67 and 115-121 (THPAHTT) contribute to the UMP site. Thr141, Asn142, Tyr147, and Asp150 together coordinate ATP.

It belongs to the UMP kinase family. Homohexamer.

The protein resides in the cytoplasm. The enzyme catalyses UMP + ATP = UDP + ADP. The protein operates within pyrimidine metabolism; CTP biosynthesis via de novo pathway; UDP from UMP (UMPK route): step 1/1. With respect to regulation, inhibited by UTP. Catalyzes the reversible phosphorylation of UMP to UDP. The protein is Uridylate kinase of Methanococcus maripaludis (strain C5 / ATCC BAA-1333).